Here is a 189-residue protein sequence, read N- to C-terminus: Matrix protein (189 aa).

This sequence belongs to the novirhabdovirus matrix protein family. As to quaternary structure, homomultimer. Interacts with nucleoprotein and with the cytoplasmic domain of glycoprotein.

Its subcellular location is the virion membrane. It localises to the host endomembrane system. Its function is as follows. Plays a major role in assembly and budding of virion. Completely covers the ribonucleoprotein coil and keep it in condensed bullet-shaped form. Inhibits viral transcription and stimulates replication. The sequence is that of Matrix protein (M) from Gobiosoma bosc (Naked goby).